A 669-amino-acid chain; its full sequence is MGTALVYHEDMTATRLLWDDPECEIERPERLTAALDRLRQRGLEQRCLRLSAREASEEELGLVHSPEYVSLVRETQVLGKEELQALSGQFDAIYFHPSTFHCARLAAGAGLQLVDAVLTGAVQNGLALVRPPGHHGQRAAANGFCVFNNVAIAAAHAKQKHGLHRILVVDWDVHHGQGIQYLFEDDPSVLYFSWHRYEHGRFWPFLRESDADAVGRGQGLGFTVNLPWNQVGMGNADYVAAFLHLLLPLAFEFDPELVLVSAGFDSAIGDPEGQMQATPECFAHLTQLLQVLAGGRVCAVLEGGYHLESLAESVCMTVQTLLGDPAPPLSGPMAPCQSALESIQSARAAQAPHWKSLQQQDVTAVPMSPSSHSPEGRPPPLLPGGPVCKAAASAPSSLLDQPCLCPAPSVRTAVALTTPDITLVLPPDVIQQEASALREETEAWARPHESLAREEALTALGKLLYLLDGMLDGQVNSGIAATPASAAAATLDVAVRRGLSHGAQRLLCVALGQLDRPPDLAHDGRSLWLNIRGKEAAALSMFHVSTPLPVMTGGFLSCILGLVLPLAYGFQPDLVLVALGPGHGLQGPHAALLAAMLRGLAGGRVLALLEENSTPQLAGILARVLNGEAPPSLGPSSVASPEDVQALMYLRGQLEPQWKMLQCHPHLVA.

Positions 1–323 (MGTALVYHED…VCMTVQTLLG (323 aa)) are histone deacetylase. Substrate is bound at residue Asp20. The Substrate specificity motif lies at 21 to 24 (PECE). Catalysis depends on His135, which acts as the Proton donor/acceptor. Positions 172, 174, and 265 each coordinate Zn(2+). Residue Tyr305 coordinates substrate. Positions 361–373 (DVTAVPMSPSSHS) are enriched in polar residues. The tract at residues 361–387 (DVTAVPMSPSSHSPEGRPPPLLPGGPV) is disordered. A Phosphoserine modification is found at Ser393.

Belongs to the histone deacetylase family. HD type 2 subfamily. In terms of assembly, interacts with HDAC3. Interacts with HDAC2 and NCOR2/SMRT. Interacts with HSPA8/HSC70. Interacts with MSH2. In terms of tissue distribution, widely expressed with high levels in liver and kidney.

The protein resides in the cytoplasm. The protein localises to the nucleus. The catalysed reaction is N(8)-acetylspermidine + H2O = spermidine + acetate. The enzyme catalyses N-acetylputrescine + H2O = putrescine + acetate. It catalyses the reaction N-acetylcadaverine + H2O = cadaverine + acetate. It carries out the reaction N(6)-acetyl-L-lysyl-[protein] + H2O = L-lysyl-[protein] + acetate. In terms of biological role, polyamine deacetylase (PDAC), which acts preferentially on N(8)-acetylspermidine, and also on acetylcadaverine and acetylputrescine. Exhibits attenuated catalytic activity toward N(1),N(8)-diacetylspermidine and very low activity, if any, toward N(1)-acetylspermidine. Histone deacetylase activity has been observed in vitro. Has also been shown to be involved in MSH2 deacetylation. The physiological relevance of protein/histone deacetylase activity is unclear and could be very weak. May play a role in the promotion of late stages of autophagy, possibly autophagosome-lysosome fusion and/or lysosomal exocytosis in neuroblastoma cells. May play a role in homologous recombination. May promote DNA mismatch repair. The sequence is that of Polyamine deacetylase HDAC10 (HDAC10) from Homo sapiens (Human).